A 158-amino-acid chain; its full sequence is Persistence and stress-resistance toxin PasT (158 aa).

The tract at residues 70 to 158 (GISKTFTTRN…VRAKEVYSAR (89 aa)) is required for resistance of nitrosative stress but not persistence or toxic effects.

Belongs to the ribosome association toxin RatA family. As to quaternary structure, associates with 50S ribosomes.

Its function is as follows. Toxic component of a type II toxin-antitoxin (TA) system. Binds to 50S ribosomal subunits, preventing them from associating with 30S subunits to form 70S ribosomes. In this strain of E.coli low levels of PasT complement operon disruption, however high levels are toxic; their effects are abrogated by high level expression of cognate antitoxin PasI. Plays a role in persistence after antibiotic exposure and survival of nitrosative stress; the toxic and persistence phenotypes are conferred by the same N-terminal region of the protein, while the stress resistance effects can be uncoupled from them in deletion mutants. The sequence is that of Persistence and stress-resistance toxin PasT (pasT) from Escherichia coli O6:H1 (strain CFT073 / ATCC 700928 / UPEC).